Consider the following 358-residue polypeptide: Serine/threonine-protein phosphatase 2A activator 2 (358 aa).

As to quaternary structure, interacts with the phosphatase PP2A catalytic subunits PPH21 and PPH22. Forms a ternary complex with PPH21-TAP42.

It is found in the cytoplasm. The enzyme catalyses [protein]-peptidylproline (omega=180) = [protein]-peptidylproline (omega=0). Its function is as follows. PPIases accelerate the folding of proteins. It catalyzes the cis-trans isomerization of proline imidic peptide bonds in oligopeptides. Acts as a regulatory subunit for TAP42-associated PP2A-like phosphatases modulating their activity or substrate specificity, probably by inducing a conformational change in the catalytic subunit, a direct target of the PPIase. Can reactivate inactive phosphatase PP2A-phosphatase methylesterase complexes (PP2Ai) in presence of ATP and Mg(2+) by dissociating the inactive form from the complex. Acts also inhibitory at high concentrations. Involved in the regulation of cell cycle progression, mitotic spindle formation and bud morphogenesis. This is Serine/threonine-protein phosphatase 2A activator 2 (RRD2) from Saccharomyces cerevisiae (strain ATCC 204508 / S288c) (Baker's yeast).